A 662-amino-acid chain; its full sequence is Bifunctional polymyxin resistance protein ArnA (662 aa).

The tract at residues 1-307 (MTSKAVVFAY…ELGLVEGARL (307 aa)) is formyltransferase ArnAFT. Residue His106 is the Proton donor; for formyltransferase activity of the active site. (6R)-10-formyltetrahydrofolate contacts are provided by residues Arg116 and 138–142 (IERAD). A dehydrogenase ArnADH region spans residues 316 to 662 (RRTRVLILGV…EALREREAQA (347 aa)). NAD(+)-binding positions include Asp349 and 370 to 371 (DI). Residues Ala395, Tyr400, and 434-435 (TS) contribute to the UDP-alpha-D-glucuronate site. Glu436 serves as the catalytic Proton acceptor; for decarboxylase activity. Residues Arg462, Asn493, 527 to 536 (RLVDGGAQKR), and Tyr614 each bind UDP-alpha-D-glucuronate. Arg620 functions as the Proton donor; for decarboxylase activity in the catalytic mechanism.

This sequence in the N-terminal section; belongs to the Fmt family. UDP-L-Ara4N formyltransferase subfamily. In the C-terminal section; belongs to the NAD(P)-dependent epimerase/dehydratase family. UDP-glucuronic acid decarboxylase subfamily. As to quaternary structure, homohexamer, formed by a dimer of trimers.

The catalysed reaction is UDP-alpha-D-glucuronate + NAD(+) = UDP-beta-L-threo-pentopyranos-4-ulose + CO2 + NADH. It catalyses the reaction UDP-4-amino-4-deoxy-beta-L-arabinose + (6R)-10-formyltetrahydrofolate = UDP-4-deoxy-4-formamido-beta-L-arabinose + (6S)-5,6,7,8-tetrahydrofolate + H(+). Its pathway is nucleotide-sugar biosynthesis; UDP-4-deoxy-4-formamido-beta-L-arabinose biosynthesis; UDP-4-deoxy-4-formamido-beta-L-arabinose from UDP-alpha-D-glucuronate: step 1/3. The protein operates within nucleotide-sugar biosynthesis; UDP-4-deoxy-4-formamido-beta-L-arabinose biosynthesis; UDP-4-deoxy-4-formamido-beta-L-arabinose from UDP-alpha-D-glucuronate: step 3/3. It functions in the pathway bacterial outer membrane biogenesis; lipopolysaccharide biosynthesis. Functionally, bifunctional enzyme that catalyzes the oxidative decarboxylation of UDP-glucuronic acid (UDP-GlcUA) to UDP-4-keto-arabinose (UDP-Ara4O) and the addition of a formyl group to UDP-4-amino-4-deoxy-L-arabinose (UDP-L-Ara4N) to form UDP-L-4-formamido-arabinose (UDP-L-Ara4FN). The modified arabinose is attached to lipid A and is required for resistance to polymyxin and cationic antimicrobial peptides. This is Bifunctional polymyxin resistance protein ArnA from Pseudomonas aeruginosa (strain LESB58).